We begin with the raw amino-acid sequence, 60 residues long: Large ribosomal subunit protein uL30 (60 aa).

This sequence belongs to the universal ribosomal protein uL30 family. As to quaternary structure, part of the 50S ribosomal subunit.

The sequence is that of Large ribosomal subunit protein uL30 from Christiangramia forsetii (strain DSM 17595 / CGMCC 1.15422 / KT0803) (Gramella forsetii).